The following is an 83-amino-acid chain: Evasin P1090 (83 aa).

The N-terminal stretch at 1 to 24 (MEVKIFAFLQIAVLIAFSLHLASA) is a signal peptide. 3 disulfides stabilise this stretch: cysteine 44–cysteine 63, cysteine 48–cysteine 65, and cysteine 59–cysteine 76. Residue asparagine 47 is glycosylated (N-linked (GlcNAc...) asparagine). The N-linked (GlcNAc...) asparagine glycan is linked to asparagine 70.

Its subcellular location is the secreted. Its function is as follows. Salivary chemokine-binding protein which binds to host chemokines CXCL1, CXCL2, CXCL3, CXCL5, CXCL6, CXCL10, CXCL11 and CXCL13. The sequence is that of Evasin P1090 from Ixodes ricinus (Common tick).